The following is a 384-amino-acid chain: UPF0284 protein alr0297 (384 aa).

Belongs to the UPF0284 family.

The chain is UPF0284 protein alr0297 from Nostoc sp. (strain PCC 7120 / SAG 25.82 / UTEX 2576).